A 209-amino-acid polypeptide reads, in one-letter code: Pyridoxine/pyridoxamine 5'-phosphate oxidase (209 aa).

Substrate is bound by residues arginine 7 to tyrosine 10 and lysine 64. FMN contacts are provided by residues arginine 59 to lysine 64, phenylalanine 74 to threonine 75, arginine 80, and lysine 81. Positions 121, 125, and 129 each coordinate substrate. Residues glutamine 138–serine 139 and tryptophan 182 contribute to the FMN site. Arginine 188–histidine 190 contacts substrate. Arginine 192 contributes to the FMN binding site.

This sequence belongs to the pyridoxamine 5'-phosphate oxidase family. In terms of assembly, homodimer. FMN serves as cofactor.

It catalyses the reaction pyridoxamine 5'-phosphate + O2 + H2O = pyridoxal 5'-phosphate + H2O2 + NH4(+). The catalysed reaction is pyridoxine 5'-phosphate + O2 = pyridoxal 5'-phosphate + H2O2. Its pathway is cofactor metabolism; pyridoxal 5'-phosphate salvage; pyridoxal 5'-phosphate from pyridoxamine 5'-phosphate: step 1/1. The protein operates within cofactor metabolism; pyridoxal 5'-phosphate salvage; pyridoxal 5'-phosphate from pyridoxine 5'-phosphate: step 1/1. In terms of biological role, catalyzes the oxidation of either pyridoxine 5'-phosphate (PNP) or pyridoxamine 5'-phosphate (PMP) into pyridoxal 5'-phosphate (PLP). In Actinobacillus pleuropneumoniae serotype 3 (strain JL03), this protein is Pyridoxine/pyridoxamine 5'-phosphate oxidase.